The chain runs to 197 residues: Putative sulfur carrier protein aq_1421 (197 aa).

C17 (cysteine persulfide intermediate) is an active-site residue.

This sequence belongs to the sulfur carrier protein TusA family.

This chain is Putative sulfur carrier protein aq_1421, found in Aquifex aeolicus (strain VF5).